Reading from the N-terminus, the 324-residue chain is NADH-quinone oxidoreductase subunit H (324 aa).

Transmembrane regions (helical) follow at residues 11–31, 81–101, 114–134, 154–174, 186–206, 237–257, 264–284, and 304–324; these read ILIT…CGAF, VIFT…FAIV, IGIL…LFAG, VSYE…AGSF, LWNV…GVAV, FFVG…TLFF, ILPP…MFIL, and VCLP…LYNA.

The protein belongs to the complex I subunit 1 family. As to quaternary structure, NDH-1 is composed of 13 different subunits. Subunits NuoA, H, J, K, L, M, N constitute the membrane sector of the complex.

The protein resides in the cell inner membrane. The enzyme catalyses a quinone + NADH + 5 H(+)(in) = a quinol + NAD(+) + 4 H(+)(out). Its function is as follows. NDH-1 shuttles electrons from NADH, via FMN and iron-sulfur (Fe-S) centers, to quinones in the respiratory chain. The immediate electron acceptor for the enzyme in this species is believed to be ubiquinone. Couples the redox reaction to proton translocation (for every two electrons transferred, four hydrogen ions are translocated across the cytoplasmic membrane), and thus conserves the redox energy in a proton gradient. This subunit may bind ubiquinone. This is NADH-quinone oxidoreductase subunit H from Pectobacterium carotovorum subsp. carotovorum (strain PC1).